A 930-amino-acid chain; its full sequence is Progesterone receptor (930 aa).

Residues 1 to 11 (MTELKAKEPRA) show a composition bias toward basic and acidic residues. Disordered stretches follow at residues 1 to 133 (MTEL…ASPA) and 148 to 260 (LPED…SGAA). The segment at 1 to 165 (MTELKAKEPR…PATKGVLAPL (165 aa)) is AF3; mediates transcriptional activation. Residues 1-565 (MTELKAKEPR…PQYSFESLPQ (565 aa)) are modulating, Pro-Rich. A Glycyl lysine isopeptide (Lys-Gly) (interchain with G-Cter in SUMO) cross-link involves residue Lys-7. Ser-20 carries the post-translational modification Phosphoserine. The segment covering 38–49 (QGSQTSEASSVV) has biased composition (polar residues). The LXXL motif 1 motif lies at 56–60 (LDGLL). Position 82 is a phosphoserine (Ser-82). An LXXL motif 2 motif is present at residues 116-120 (LDTLL). At Ser-131 the chain carries Phosphoserine. Residues 166 to 304 (MSRPEDKAGD…LATSVVDFIH (139 aa)) are mediates transcriptional transrepression. The Nuclear localization signal signature appears at 184–188 (KVLPR). The segment covering 187–204 (PRGLSPSRQLLLPSSGSP) has biased composition (low complexity). Phosphoserine is present on residues Ser-191 and Ser-212. Ser-293 bears the Phosphoserine; by MAPK1 mark. Residues 334 to 356 (AASPFVPQRGSPSASSTPVAGGD) are disordered. A Phosphoserine; by MAPK modification is found at Ser-344. Residue Lys-387 forms a Glycyl lysine isopeptide (Lys-Gly) (interchain with G-Cter in SUMO); alternate linkage. Residue Lys-387 forms a Glycyl lysine isopeptide (Lys-Gly) (interchain with G-Cter in ubiquitin); alternate linkage. Residue Ser-399 is modified to Phosphoserine; by CDK2. The segment at 415–454 (DFQLAAPPPPSLPPRVPSSRPGEAAVAASPGSASVSSSSS) is disordered. The segment covering 420-430 (APPPPSLPPRV) has biased composition (pro residues). Residues 431–454 (PSSRPGEAAVAASPGSASVSSSSS) show a composition bias toward low complexity. The AF1; mediates transcriptional activation stretch occupies residues 457-547 (STLECILYKA…VYTPYLNYLR (91 aa)). Lys-532 is covalently cross-linked (Glycyl lysine isopeptide (Lys-Gly) (interchain with G-Cter in SUMO)). Residues 566–640 (KICLICGDEA…AGMVLGGRKF (75 aa)) constitute a DNA-binding region (nuclear receptor). 2 consecutive NR C4-type zinc fingers follow at residues 568–588 (CLIC…CGSC) and 604–628 (CAGR…LRKC). Ser-673 carries the phosphoserine modification. In terms of domain architecture, NR LBD spans 676-910 (QEIQLIPPLI…EFPEMMSEVI (235 aa)). The segment at 684–930 (LINLLMSIEP…MVKPLLFHKK (247 aa)) is AF2; mediates transcriptional activation. Position 763 (Arg-763) interacts with progesterone.

It belongs to the nuclear hormone receptor family. NR3 subfamily. In terms of assembly, interacts with SMARD1 and UNC45A. Interacts with CUEDC2; the interaction promotes ubiquitination, decreases sumoylation, and represses transcriptional activity. Interacts with PIAS3; the interaction promotes sumoylation of PR in a hormone-dependent manner, inhibits DNA-binding, and alters nuclear export. Interacts with SP1; the interaction requires ligand-induced phosphorylation on Ser-344 by ERK1/2-MAPK. Interacts with PRMT2. Interacts with NCOA2 and NCOA1. Interacts with KLF9. Interacts with GTF2B. Post-translationally, phosphorylated on multiple serine sites. Several of these sites are hormone-dependent. Phosphorylation on Ser-293 is highly hormone-dependent and modulates ubiquitination and sumoylation on Lys-387. Phosphorylation on Ser-102 and Ser-344 also requires induction by hormone. Basal phosphorylation on Ser-82, Ser-191 and Ser-399 is increased in response to progesterone and can be phosphorylated in vitro by the CDK2-A1 complex. Increased levels of phosphorylation on Ser-399 also in the presence of EGF, heregulin, IGF, PMA and FBS. Phosphorylation at this site by CDK2 is ligand-independent, and increases nuclear translocation and transcriptional activity. Phosphorylation at Ser-293, but not at Ser-191, is impaired during the G(2)/M phase of the cell cycle. Phosphorylation on Ser-344 by ERK1/2 MAPK is required for interaction with SP1. Sumoylation is hormone-dependent and represses transcriptional activity. Sumoylation on all three sites is enhanced by PIAS3. Desumoylated by SENP1. Sumoylation on Lys-387, the main site of sumoylation, is repressed by ubiquitination on the same site, and modulated by phosphorylation at Ser-293. In terms of processing, ubiquitination is hormone-dependent and represses sumoylation on the same site. Promoted by MAPK-mediated phosphorylation on Ser-293. Ubiquitinated by UBR5, leading to its degradation: UBR5 specifically recognizes and binds ligand-bound PGR when it is not associated with coactivators (NCOAs). In presence of NCOAs, the UBR5-degron is not accessible, preventing its ubiquitination and degradation. Post-translationally, palmitoylated by ZDHHC7 and ZDHHC21. Palmitoylation is required for plasma membrane targeting and for rapid intracellular signaling via ERK and AKT kinases and cAMP generation.

It localises to the nucleus. Its subcellular location is the cytoplasm. Its function is as follows. The steroid hormones and their receptors are involved in the regulation of eukaryotic gene expression and affect cellular proliferation and differentiation in target tissues. Transcriptional activator of several progesteron-dependent promoters in a variety of cell types. Involved in activation of SRC-dependent MAPK signaling on hormone stimulation. This is Progesterone receptor (PGR) from Oryctolagus cuniculus (Rabbit).